The following is a 462-amino-acid chain: GTPase HflX (462 aa).

Residues 255–452 form the Hflx-type G domain; that stretch reads PAVGIVGYTN…LLEEKIYNLP (198 aa). GTP-binding positions include 261–268, 286–290, 308–311, 374–377, and 430–432; these read GYTNAGKS, FATLD, DTVG, NKID, and SAY. Residues serine 268 and threonine 288 each coordinate Mg(2+).

It belongs to the TRAFAC class OBG-HflX-like GTPase superfamily. HflX GTPase family. As to quaternary structure, monomer. Associates with the 50S ribosomal subunit. Requires Mg(2+) as cofactor.

Its subcellular location is the cytoplasm. Functionally, GTPase that associates with the 50S ribosomal subunit and may have a role during protein synthesis or ribosome biogenesis. The chain is GTPase HflX from Leptospira borgpetersenii serovar Hardjo-bovis (strain JB197).